The following is a 499-amino-acid chain: Maturase K (499 aa).

This sequence belongs to the intron maturase 2 family. MatK subfamily.

The protein localises to the plastid. It localises to the chloroplast. In terms of biological role, usually encoded in the trnK tRNA gene intron. Probably assists in splicing its own and other chloroplast group II introns. In Gymnocladus chinensis (Soap tree), this protein is Maturase K.